The chain runs to 131 residues: Small nuclear ribonucleoprotein SmD3b (131 aa).

A Sm domain is found at 7 to 79 (IPVKLLHEAS…VRFMVIPDIL (73 aa)). The tract at residues 96–131 (SSSLGVGRGRGAMRGKPAAGPGRGTGGRGAVPPVRR) is disordered.

This sequence belongs to the snRNP core protein family. In terms of tissue distribution, expressed in young seedlings, roots, leaves, flowers and immature siliques.

It is found in the cytoplasm. The protein localises to the cytosol. It localises to the nucleus. Core component of the spliceosomal U1, U2, U4 and U5 small nuclear ribonucleoproteins (snRNPs), the building blocks of the spliceosome. May play a major role in the splicing of cellular pre-mRNAs. Required for normal plant development. The polypeptide is Small nuclear ribonucleoprotein SmD3b (Arabidopsis thaliana (Mouse-ear cress)).